A 641-amino-acid polypeptide reads, in one-letter code: tRNA 5-methylaminomethyl-2-thiouridine biosynthesis bifunctional protein MnmC (641 aa).

The segment at methionine 1–threonine 219 is tRNA (mnm(5)s(2)U34)-methyltransferase. The FAD-dependent cmnm(5)s(2)U34 oxidoreductase stretch occupies residues isoleucine 232–valine 641.

In the N-terminal section; belongs to the methyltransferase superfamily. tRNA (mnm(5)s(2)U34)-methyltransferase family. This sequence in the C-terminal section; belongs to the DAO family. The cofactor is FAD.

It localises to the cytoplasm. It carries out the reaction 5-aminomethyl-2-thiouridine(34) in tRNA + S-adenosyl-L-methionine = 5-methylaminomethyl-2-thiouridine(34) in tRNA + S-adenosyl-L-homocysteine + H(+). Its function is as follows. Catalyzes the last two steps in the biosynthesis of 5-methylaminomethyl-2-thiouridine (mnm(5)s(2)U) at the wobble position (U34) in tRNA. Catalyzes the FAD-dependent demodification of cmnm(5)s(2)U34 to nm(5)s(2)U34, followed by the transfer of a methyl group from S-adenosyl-L-methionine to nm(5)s(2)U34, to form mnm(5)s(2)U34. The polypeptide is tRNA 5-methylaminomethyl-2-thiouridine biosynthesis bifunctional protein MnmC (Shewanella pealeana (strain ATCC 700345 / ANG-SQ1)).